We begin with the raw amino-acid sequence, 298 residues long: Glyoxalase domain-containing protein 4 (298 aa).

Positions 5 to 130 (RALHFVFKVG…GGYKFYLQDR (126 aa)) constitute a VOC 1 domain. Residue Lys109 is modified to N6-succinyllysine. Ser131 is modified (phosphoserine). Residues 137–258 (PVLKVTLAVS…DGHEICFVGD (122 aa)) enclose the VOC 2 domain. Lys273 is subject to N6-succinyllysine.

The protein belongs to the glyoxalase I family. Interacts with NUDT9.

The protein resides in the mitochondrion. In Rattus norvegicus (Rat), this protein is Glyoxalase domain-containing protein 4 (Glod4).